The following is a 562-amino-acid chain: Dihydroxy-acid dehydratase (562 aa).

Asp80 contributes to the Mg(2+) binding site. Position 121 (Cys121) interacts with [2Fe-2S] cluster. Positions 122 and 123 each coordinate Mg(2+). N6-carboxylysine is present on Lys123. Position 194 (Cys194) interacts with [2Fe-2S] cluster. A Mg(2+)-binding site is contributed by Glu446. Ser472 serves as the catalytic Proton acceptor.

This sequence belongs to the IlvD/Edd family. Homodimer. [2Fe-2S] cluster serves as cofactor. Mg(2+) is required as a cofactor.

It catalyses the reaction (2R)-2,3-dihydroxy-3-methylbutanoate = 3-methyl-2-oxobutanoate + H2O. It carries out the reaction (2R,3R)-2,3-dihydroxy-3-methylpentanoate = (S)-3-methyl-2-oxopentanoate + H2O. Its pathway is amino-acid biosynthesis; L-isoleucine biosynthesis; L-isoleucine from 2-oxobutanoate: step 3/4. The protein operates within amino-acid biosynthesis; L-valine biosynthesis; L-valine from pyruvate: step 3/4. Its function is as follows. Functions in the biosynthesis of branched-chain amino acids. Catalyzes the dehydration of (2R,3R)-2,3-dihydroxy-3-methylpentanoate (2,3-dihydroxy-3-methylvalerate) into 2-oxo-3-methylpentanoate (2-oxo-3-methylvalerate) and of (2R)-2,3-dihydroxy-3-methylbutanoate (2,3-dihydroxyisovalerate) into 2-oxo-3-methylbutanoate (2-oxoisovalerate), the penultimate precursor to L-isoleucine and L-valine, respectively. The protein is Dihydroxy-acid dehydratase of Staphylococcus aureus (strain USA300 / TCH1516).